The chain runs to 91 residues: Metalloproteinase inhibitor 2 (91 aa).

The region spanning 1-91 is the NTR domain; that stretch reads KAVSEKEVDS…FIVPWDTLST (91 aa).

It belongs to the protease inhibitor I35 (TIMP) family. Post-translationally, the activity of TIMP2 is dependent on the presence of disulfide bonds.

It is found in the secreted. Its function is as follows. Complexes with metalloproteinases (such as collagenases) and irreversibly inactivates them. The protein is Metalloproteinase inhibitor 2 (TIMP2) of Equus caballus (Horse).